A 338-amino-acid chain; its full sequence is Glyceraldehyde-3-phosphate dehydrogenase, cytosolic (338 aa).

Positions 2-153 are binding to NAD; it reads ADKKIKIGIN…YKSDLNIVSN (152 aa). NAD(+)-binding positions include 15–16 and D37; that span reads RI. The interval 56-75 is external loop; that stretch reads GQWKHNELKVKDEKTLLFGE. R84 lines the NAD(+) pocket. Positions 154–338 are catalytic; sequence ASCTTNCLAP…VDLIIHMSKA (185 aa). 155 to 157 contributes to the D-glyceraldehyde 3-phosphate binding site; it reads SCT. The active-site Nucleophile is the C156. C156 and C160 each carry S-nitrosocysteine. Positions 183–206 are S-loop; that stretch reads HSITATQKTVDGPSMKDWRGGRAA. D-glyceraldehyde 3-phosphate-binding positions include T186, 215–216, and R238; that span reads TG. N320 is an NAD(+) binding site.

This sequence belongs to the glyceraldehyde-3-phosphate dehydrogenase family. In terms of assembly, homotetramer.

Its subcellular location is the cytoplasm. The catalysed reaction is D-glyceraldehyde 3-phosphate + phosphate + NAD(+) = (2R)-3-phospho-glyceroyl phosphate + NADH + H(+). It participates in carbohydrate degradation; glycolysis; pyruvate from D-glyceraldehyde 3-phosphate: step 1/5. In terms of biological role, key enzyme in glycolysis that catalyzes the first step of the pathway by converting D-glyceraldehyde 3-phosphate (G3P) into 3-phospho-D-glyceroyl phosphate. Essential for the maintenance of cellular ATP levels and carbohydrate metabolism. In Sinapis alba (White mustard), this protein is Glyceraldehyde-3-phosphate dehydrogenase, cytosolic (GAPC).